A 94-amino-acid chain; its full sequence is Cell division topological specificity factor (94 aa).

This sequence belongs to the MinE family.

Prevents the cell division inhibition by proteins MinC and MinD at internal division sites while permitting inhibition at polar sites. This ensures cell division at the proper site by restricting the formation of a division septum at the midpoint of the long axis of the cell. This chain is Cell division topological specificity factor, found in Acetivibrio thermocellus (strain ATCC 27405 / DSM 1237 / JCM 9322 / NBRC 103400 / NCIMB 10682 / NRRL B-4536 / VPI 7372) (Clostridium thermocellum).